Here is an 882-residue protein sequence, read N- to C-terminus: Cadherin-1 (882 aa).

The N-terminal stretch at 1-22 (MGPWSRSLSALLLLLQVSSWLC) is a signal peptide. Positions 23 to 154 (QEPEPCHPGF…SSSGLRRRKR (132 aa)) are excised as a propeptide. An N-linked (GlcNAc...) asparagine glycan is attached at N144. 5 Cadherin domains span residues 155–262 (DWVI…KPEF), 263–375 (TQEV…PPVF), 376–486 (NPTT…APIF), 487–593 (VPPE…DNAP), and 594–697 (IPEP…VCKK). At 155–709 (DWVIPPISCP…PIEAGLQIPA (555 aa)) the chain is on the extracellular side. D257 contacts Ca(2+). S280 carries O-linked (Man...) serine glycosylation. An O-linked (Man...) threonine glycan is attached at T285. D288 provides a ligand contact to Ca(2+). O-linked (Man...) threonine glycans are attached at residues T358, T470, T472, and T509. The N-linked (GlcNAc...) asparagine glycan is linked to N558. O-linked (Man...) threonine glycosylation is found at T576, T578, and T580. An N-linked (GlcNAc...) asparagine glycan is attached at N637. Residues 710-730 (ILGILGGILALLILILLLLLF) form a helical membrane-spanning segment. Residues 731 to 882 (LRRRAVVKEP…ADMYGGGEDD (152 aa)) are Cytoplasmic-facing. A disordered region spans residues 747–767 (DTRDNVYYYDEEGGGEEDQDF). 3 positions are modified to phosphotyrosine; by SRC: Y753, Y754, and Y755. The segment covering 755 to 767 (YDEEGGGEEDQDF) has biased composition (acidic residues). The required for binding CTNND1 and PSEN1 stretch occupies residues 758–769 (EGGGEEDQDFDL). Residues S770, S793, S838, S840, and S846 each carry the phosphoserine modification. Residues 811–882 (IDENLKAADT…ADMYGGGEDD (72 aa)) are required for binding alpha, beta and gamma catenins.

In terms of assembly, homodimer; disulfide-linked. Component of an E-cadherin/ catenin adhesion complex composed of at least E-cadherin/CDH1, beta-catenin/CTNNB1 or gamma-catenin/JUP, and potentially alpha-catenin/CTNNA1; the complex is located to adherens junctions. Found in a complex composed of CDH1, RAP1A and PKP3; PKP3 acts as a scaffold protein within the complex, the complex is required for CDH1 localization to mature desmosome cell junctions. Interacts with the TRPV4 and CTNNB1 complex. Interacts with CTNND1. The stable association of CTNNA1 is controversial as CTNNA1 was shown not to bind to F-actin when assembled in the complex. Alternatively, the CTNNA1-containing complex may be linked to F-actin by other proteins such as LIMA1. Interaction with PSEN1, cleaves CDH1 resulting in the disassociation of cadherin-based adherens junctions (CAJs). Interacts with AJAP1 and DLGAP5. Interacts with TBC1D2. Interacts with LIMA1. Interacts with CAV1. Interacts with PIP5K1C. Interacts with RAB8B. Interacts with DDR1; this stabilizes CDH1 at the cell surface and inhibits its internalization. Interacts with RAPGEF2. Interacts with KLRG1. Forms a ternary complex composed of ADAM10, CADH1 and EPHA4; within the complex, CADH1 is cleaved by ADAM10 which disrupts adherens junctions. Interacts with SPEF1. Interacts with CTNNB1 and PKP2. Interacts with AMOTL2; the interaction may facilitate binding of radial actin fibers to cell junction complexes. Interacts with DSG3; the interaction is required for CDH1 localization to developing adherens junctions. Post-translationally, during apoptosis or with calcium influx, cleaved by a membrane-bound metalloproteinase (ADAM10), PS1/gamma-secretase and caspase-3. Processing by the metalloproteinase, induced by calcium influx, causes disruption of cell-cell adhesion and the subsequent release of beta-catenin into the cytoplasm. The residual membrane-tethered cleavage product is rapidly degraded via an intracellular proteolytic pathway. Cleavage by caspase-3 releases the cytoplasmic tail resulting in disintegration of the actin microfilament system. The gamma-secretase-mediated cleavage promotes disassembly of adherens junctions. During development of the cochlear organ of Corti, cleavage by ADAM10 at adherens junctions promotes pillar cell separation. In terms of processing, N-glycosylation at Asn-637 is essential for expression, folding and trafficking. Addition of bisecting N-acetylglucosamine by MGAT3 modulates its cell membrane location. Ubiquitinated by a SCF complex containing SKP2, which requires prior phosphorylation by CK1/CSNK1A1. Ubiquitinated by CBLL1/HAKAI, requires prior phosphorylation at Tyr-754. Post-translationally, O-glycosylated. O-manosylated by TMTC1, TMTC2, TMTC3 or TMTC4. Thr-285 and Thr-509 are O-mannosylated by TMTC2 or TMTC4 but not TMTC1 or TMTC3.

It localises to the cell junction. The protein resides in the adherens junction. Its subcellular location is the cell membrane. It is found in the endosome. The protein localises to the golgi apparatus. It localises to the trans-Golgi network. The protein resides in the cytoplasm. Its subcellular location is the desmosome. Functionally, cadherins are calcium-dependent cell adhesion proteins. They preferentially interact with themselves in a homophilic manner in connecting cells; cadherins may thus contribute to the sorting of heterogeneous cell types. CDH1 is involved in mechanisms regulating cell-cell adhesions, mobility and proliferation of epithelial cells. Promotes organization of radial actin fiber structure and cellular response to contractile forces, via its interaction with AMOTL2 which facilitates anchoring of radial actin fibers to CDH1 junction complexes at the cell membrane. Plays a role in the early stages of desmosome cell-cell junction formation via facilitating the recruitment of DSG2 and DSP to desmosome plaques. Has a potent invasive suppressor role. It is a ligand for integrin alpha-E/beta-7. In terms of biological role, E-Cad/CTF2 promotes non-amyloidogenic degradation of Abeta precursors. Has a strong inhibitory effect on APP C99 and C83 production. The protein is Cadherin-1 (CDH1) of Pongo abelii (Sumatran orangutan).